The chain runs to 374 residues: MAASAAAAELQASGGPRHPVCLLVLGMAGSGKTTFVQRLTGHLHAQGTPPYVINLDPAVHEVPFPANIDIRDTVKYKEVMKQYGLGPNGGIVTSLNLFATRFDQVMKFIEKAQNMSKYVLIDTPGQIEVFTWSASGTIITEALASSFPTVVIYVMDTSRSTNPVTFMSNMLYACSILYKTKLPFIVVMNKTDIIDHSFAVEWMQDFEAFQDALNQETTYVSNLTRSMSLVLDEFYSSLRVVGVSAVLGTGLDELFVQVTSAAEEYEREYRPEYERLKKSLANAESQQQREQLERLRKDMGSVALDAGTAKDSLSPVLHPSDLILTRGTLDEEDEEADSDTDDIDHRVTEESHEEPAFQNFMQESMAQYWKRNNK.

Alanine 2 is modified (N-acetylalanine). Residue 29–34 coordinates GTP; sequence GSGKTT. A Gly-Pro-Asn (GPN)-loop; involved in dimer interface motif is present at residues 86-88; that stretch reads GPN. Residue 189–192 participates in GTP binding; that stretch reads NKTD. Serine 301, serine 312, and serine 314 each carry phosphoserine. The segment at 326–354 is disordered; that stretch reads RGTLDEEDEEADSDTDDIDHRVTEESHEE. Threonine 328 is modified (phosphothreonine). The span at 330-342 shows a compositional bias: acidic residues; sequence DEEDEEADSDTDD. At serine 338 the chain carries Phosphoserine. Threonine 340 carries the post-translational modification Phosphothreonine. The segment covering 343–354 has biased composition (basic and acidic residues); sequence IDHRVTEESHEE.

The protein belongs to the GPN-loop GTPase family. Heterodimer with GPN3. Binds to RNA polymerase II (RNAPII). Interacts directly with RNAPII subunits RPB4 and RPB7 and the CTD of RPB1. Interacts with XPA. As to expression, expressed ubiquitously.

The protein localises to the cytoplasm. It is found in the nucleus. Small GTPase required for proper nuclear import of RNA polymerase II (RNAPII). May act at an RNAP assembly step prior to nuclear import. Forms an interface between the RNA polymerase II enzyme and chaperone/scaffolding proteins, suggesting that it is required to connect RNA polymerase II to regulators of protein complex formation. May be involved in nuclear localization of XPA. This is GPN-loop GTPase 1 from Homo sapiens (Human).